The following is a 329-amino-acid chain: Quinone-oxidoreductase QR1, chloroplastic (329 aa).

It belongs to the zinc-containing alcohol dehydrogenase family. Quinone oxidoreductase subfamily.

Its subcellular location is the plastid. The protein localises to the chloroplast outer membrane. The catalysed reaction is 2 a quinone + NADPH + H(+) = 2 a 1,4-benzosemiquinone + NADP(+). Its activity is regulated as follows. Inhibited by dicumarol. Functionally, NADPH-dependent single-electron reducing quinone reductase. Involved in haustorium initiation in parasitic plants through redox cycling of exogenous haustorium-inducing factors. Can use 9,10-phenanthrenequinone (PAQ), 1,2-naphthoquinone, 5-hydroxy-1,4-naphthoquinone (juglone) and 2,6-dimethoxy-p-benzoquinone (DMBQ) as substrates, but has no activity with menadione, diamide, 2,3-dimethoxy-5-methyl-1,4-benzoquinone or 1,4-naphthoquinone. The protein is Quinone-oxidoreductase QR1, chloroplastic of Triphysaria versicolor (Yellow owl's clover).